We begin with the raw amino-acid sequence, 633 residues long: Glutamyl-tRNA(Gln) amidotransferase subunit E (633 aa).

Belongs to the GatB/GatE family. GatE subfamily. Heterodimer of GatD and GatE.

The enzyme catalyses L-glutamyl-tRNA(Gln) + L-glutamine + ATP + H2O = L-glutaminyl-tRNA(Gln) + L-glutamate + ADP + phosphate + H(+). Its function is as follows. Allows the formation of correctly charged Gln-tRNA(Gln) through the transamidation of misacylated Glu-tRNA(Gln) in organisms which lack glutaminyl-tRNA synthetase. The reaction takes place in the presence of glutamine and ATP through an activated gamma-phospho-Glu-tRNA(Gln). The GatDE system is specific for glutamate and does not act on aspartate. The chain is Glutamyl-tRNA(Gln) amidotransferase subunit E from Methanosarcina acetivorans (strain ATCC 35395 / DSM 2834 / JCM 12185 / C2A).